The following is a 223-amino-acid chain: Histone H1.5 (223 aa).

Over residues 1–14 the composition is skewed to low complexity; the sequence is MSETAPAETAAPAP. Positions 1-56 are disordered; it reads MSETAPAETAAPAPVEKSPAKKKTTKKAGAAKRKATGPPVSELITKAVSASKERGG. N-acetylserine is present on Ser2. Ser2 is subject to Phosphoserine. Lys17 is modified (N6-acetyllysine). At Ser18 the chain carries Phosphoserine. Residues 20 to 35 show a composition bias toward basic residues; it reads AKKKTTKKAGAAKRKA. Lys27 carries the N6-methyllysine modification. Lys34 is modified (N6-(beta-hydroxybutyryl)lysine; alternate). N6-succinyllysine; alternate is present on Lys34. Residue Thr36 is modified to Phosphothreonine. The 74-residue stretch at 36–109 folds into the H15 domain; the sequence is TGPPVSELIT…GASGSFKLNK (74 aa). N6-acetyllysine is present on Lys46. An N6-(beta-hydroxybutyryl)lysine modification is found at Lys52. Arg54 is subject to Citrulline. The residue at position 64 (Lys64) is an N6-(beta-hydroxybutyryl)lysine. Lys75 carries the N6-acetyllysine modification. 3 positions are modified to N6-(beta-hydroxybutyryl)lysine: Lys85, Lys90, and Lys106. The disordered stretch occupies residues 91–223; sequence GTLVQTKGTG…KAKKAVSKKK (133 aa). A compositionally biased stretch (basic residues) spans 119 to 130; sequence KAKKTGAAKAKK. Phosphothreonine is present on residues Thr135 and Thr152. Residues 137 to 158 are compositionally biased toward basic residues; the sequence is KKPKKTAGAKKTVKKTPKKAKK. N6-acetyllysine is present on Lys165. The span at 166 to 184 shows a compositional bias: basic residues; that stretch reads KVAKSPKKAKAAAKPKKAA. 2 positions are modified to phosphoserine: Ser170 and Ser186. The span at 191 to 223 shows a compositional bias: basic residues; sequence KAVKSKASKPKVTKPKTAKPKAAKAKKAVSKKK.

This sequence belongs to the histone H1/H5 family. In terms of assembly, interacts with MSX1. In terms of processing, H1 histones are progressively phosphorylated during the cell cycle, becoming maximally phosphorylated during late G2 phase and M phase, and being dephosphorylated sharply thereafter. Post-translationally, citrullination at Arg-54 (H1R54ci) by PADI4 takes place within the DNA-binding site of H1 and results in its displacement from chromatin and global chromatin decondensation, thereby promoting pluripotency and stem cell maintenance. Hydroxybutyrylation of histones is induced by starvation.

The protein localises to the nucleus. Its subcellular location is the chromosome. Histone H1 protein binds to linker DNA between nucleosomes forming the macromolecular structure known as the chromatin fiber. Histones H1 are necessary for the condensation of nucleosome chains into higher-order structured fibers. Also acts as a regulator of individual gene transcription through chromatin remodeling, nucleosome spacing and DNA methylation. The chain is Histone H1.5 (H1-5) from Mus musculus (Mouse).